The chain runs to 320 residues: Lipoyl synthase (320 aa).

Residues 1–28 (MVTVVDRVTDRRLRHPEKAHRPDTSVQK) are disordered. The segment covering 19–28 (AHRPDTSVQK) has biased composition (basic and acidic residues). The [4Fe-4S] cluster site is built by Cys59, Cys64, Cys70, Cys85, Cys89, Cys92, and Ser298. A Radical SAM core domain is found at 71-287 (WSQRHASFMI…AKIGKVKGFL (217 aa)).

The protein belongs to the radical SAM superfamily. Lipoyl synthase family. The cofactor is [4Fe-4S] cluster.

The protein localises to the cytoplasm. The enzyme catalyses [[Fe-S] cluster scaffold protein carrying a second [4Fe-4S](2+) cluster] + N(6)-octanoyl-L-lysyl-[protein] + 2 oxidized [2Fe-2S]-[ferredoxin] + 2 S-adenosyl-L-methionine + 4 H(+) = [[Fe-S] cluster scaffold protein] + N(6)-[(R)-dihydrolipoyl]-L-lysyl-[protein] + 4 Fe(3+) + 2 hydrogen sulfide + 2 5'-deoxyadenosine + 2 L-methionine + 2 reduced [2Fe-2S]-[ferredoxin]. It participates in protein modification; protein lipoylation via endogenous pathway; protein N(6)-(lipoyl)lysine from octanoyl-[acyl-carrier-protein]: step 2/2. In terms of biological role, catalyzes the radical-mediated insertion of two sulfur atoms into the C-6 and C-8 positions of the octanoyl moiety bound to the lipoyl domains of lipoate-dependent enzymes, thereby converting the octanoylated domains into lipoylated derivatives. This Bartonella henselae (strain ATCC 49882 / DSM 28221 / CCUG 30454 / Houston 1) (Rochalimaea henselae) protein is Lipoyl synthase.